Here is a 209-residue protein sequence, read N- to C-terminus: Chromophore lyase CpcT/CpeT 1 (209 aa).

Belongs to the CpcT/CpeT biliprotein lyase family.

Its function is as follows. Covalently attaches a chromophore to Cys residue(s) of phycobiliproteins. In Trichodesmium erythraeum (strain IMS101), this protein is Chromophore lyase CpcT/CpeT 1.